Consider the following 434-residue polypeptide: Nicotinate phosphoribosyltransferase (434 aa).

H242 bears the Phosphohistidine; by autocatalysis mark.

It belongs to the NAPRTase family. Post-translationally, transiently phosphorylated on a His residue during the reaction cycle. Phosphorylation strongly increases the affinity for substrates and increases the rate of nicotinate D-ribonucleotide production. Dephosphorylation regenerates the low-affinity form of the enzyme, leading to product release.

The catalysed reaction is nicotinate + 5-phospho-alpha-D-ribose 1-diphosphate + ATP + H2O = nicotinate beta-D-ribonucleotide + ADP + phosphate + diphosphate. It participates in cofactor biosynthesis; NAD(+) biosynthesis; nicotinate D-ribonucleotide from nicotinate: step 1/1. In terms of biological role, catalyzes the synthesis of beta-nicotinate D-ribonucleotide from nicotinate and 5-phospho-D-ribose 1-phosphate at the expense of ATP. This chain is Nicotinate phosphoribosyltransferase, found in Nitrobacter hamburgensis (strain DSM 10229 / NCIMB 13809 / X14).